The following is a 215-amino-acid chain: HTH-type transcriptional repressor FabR (215 aa).

An HTH tetR-type domain is found at 10–70; sequence KTRRSLVEAA…TMVDESGLML (61 aa). The H-T-H motif DNA-binding region spans 33–52; it reads SLREVAREAGIAPTSFYRHF.

Homodimer.

Its subcellular location is the cytoplasm. In terms of biological role, represses the transcription of fabB, involved in unsaturated fatty acid (UFA) biosynthesis. By controlling UFA production, FabR directly influences the physical properties of the membrane bilayer. This Escherichia coli O139:H28 (strain E24377A / ETEC) protein is HTH-type transcriptional repressor FabR.